Here is a 91-residue protein sequence, read N- to C-terminus: Small ribosomal subunit protein bS20 (91 aa).

The disordered stretch occupies residues 72-91; that stretch reads KNAASRQKSRLAKKLNGLSA.

It belongs to the bacterial ribosomal protein bS20 family.

Binds directly to 16S ribosomal RNA. This chain is Small ribosomal subunit protein bS20, found in Halalkalibacterium halodurans (strain ATCC BAA-125 / DSM 18197 / FERM 7344 / JCM 9153 / C-125) (Bacillus halodurans).